A 263-amino-acid chain; its full sequence is Acetylglutamate kinase (263 aa).

Residues 48–49 (GG), arginine 70, and asparagine 162 contribute to the substrate site.

It belongs to the acetylglutamate kinase family. ArgB subfamily.

Its subcellular location is the cytoplasm. It catalyses the reaction N-acetyl-L-glutamate + ATP = N-acetyl-L-glutamyl 5-phosphate + ADP. Its pathway is amino-acid biosynthesis; L-arginine biosynthesis; N(2)-acetyl-L-ornithine from L-glutamate: step 2/4. Its function is as follows. Catalyzes the ATP-dependent phosphorylation of N-acetyl-L-glutamate. The protein is Acetylglutamate kinase of Vibrio campbellii (strain ATCC BAA-1116).